We begin with the raw amino-acid sequence, 730 residues long: Multifunctional procollagen lysine hydroxylase and glycosyltransferase (730 aa).

Positions 1–16 (MRVLPFLLPLIPVLLA) are cleaved as a signal peptide. The tract at residues 20-280 (TDLPELVVVT…CGLEVKESEE (261 aa)) is required for glycosyltransferase activity. UDP contacts are provided by residues 30-32 (VAT) and 98-100 (DAY). Mn(2+)-binding residues include Asp-98, Asp-101, and His-242. Residue 245–248 (GPSK) participates in UDP binding. The cysteines at positions 268 and 271 are disulfide-linked. An accessory region region spans residues 281–507 (VPLIALNLFI…YYGFLIVSDE (227 aa)). Cys-554 and Cys-690 are joined by a disulfide. Residues Arg-590 and Tyr-648 each contribute to the 2-oxoglutarate site. The Fe2OG dioxygenase domain occupies 639–730 (ESNMMFVVRY…RYIMVSFINP (92 aa)). Positions 659 and 661 each coordinate Fe cation. Residues 664–707 (TFSIDIALNKKGRDYEGGGVRYIRYNCTVPADEVGYAMMFPGRL) form an important for dimerization region. A glycan (N-linked (GlcNAc...) asparagine) is linked at Asn-689. His-711 is a Fe cation binding site. Residue Arg-721 participates in 2-oxoglutarate binding.

As to quaternary structure, homodimer. Fe(2+) is required as a cofactor. The cofactor is L-ascorbate. It depends on Mn(2+) as a cofactor.

The protein resides in the rough endoplasmic reticulum. Its subcellular location is the endoplasmic reticulum lumen. The protein localises to the endoplasmic reticulum membrane. It localises to the secreted. It is found in the extracellular space. It catalyses the reaction L-lysyl-[collagen] + 2-oxoglutarate + O2 = (5R)-5-hydroxy-L-lysyl-[collagen] + succinate + CO2. The enzyme catalyses (5R)-5-hydroxy-L-lysyl-[collagen] + UDP-alpha-D-galactose = (5R)-5-O-(beta-D-galactosyl)-5-hydroxy-L-lysyl-[collagen] + UDP + H(+). The catalysed reaction is (5R)-5-O-(beta-D-galactosyl)-5-hydroxy-L-lysyl-[collagen] + UDP-alpha-D-glucose = (5R)-5-O-[alpha-D-glucosyl-(1-&gt;2)-beta-D-galactosyl]-5-hydroxy-L-lysyl-[collagen] + UDP + H(+). Multifunctional enzyme that catalyzes a series of post-translational modifications on Lys residues in procollagen. Catalyzes the formation of hydroxylysine residues in -Xaa-Lys-Gly- sequences in type IV collagens. Transfers galactose onto hydroxylysine groups, giving rise to galactosyl 5-hydroxylysine. Catalyzes the subsequent transfer of glucose moieties, giving rise to 1,2-glucosylgalactosyl-5-hydroxylysine residues. Essential for normal biosynthesis and secretion of type IV collagens. Essential for normal stability of the basement membrane. The polypeptide is Multifunctional procollagen lysine hydroxylase and glycosyltransferase (let-268) (Caenorhabditis elegans).